We begin with the raw amino-acid sequence, 203 residues long: FMN-dependent NADH:quinone oxidoreductase 3 (203 aa).

FMN-binding positions include Ser-9, 15–17 (SAS), 95–98 (MYNF), and 139–142 (TAGG).

This sequence belongs to the azoreductase type 1 family. Homodimer. FMN is required as a cofactor.

The enzyme catalyses 2 a quinone + NADH + H(+) = 2 a 1,4-benzosemiquinone + NAD(+). It carries out the reaction N,N-dimethyl-1,4-phenylenediamine + anthranilate + 2 NAD(+) = 2-(4-dimethylaminophenyl)diazenylbenzoate + 2 NADH + 2 H(+). Its function is as follows. Quinone reductase that provides resistance to thiol-specific stress caused by electrophilic quinones. Functionally, also exhibits azoreductase activity. Catalyzes the reductive cleavage of the azo bond in aromatic azo compounds to the corresponding amines. The sequence is that of FMN-dependent NADH:quinone oxidoreductase 3 from Pseudomonas fluorescens (strain Pf0-1).